The primary structure comprises 349 residues: MDENKSKALQAALSQIEKQFGKNTVMRLGDNTVQAVEAVSTGSLTLDIALGIGGLPKGRIIEIYGPESSGKTTMTLQAIAQCQKSGGTCAFIDAEHALDPQYARKLGVDIDNLLVSQPDNGEQALEIADMLVRSGAIDLIVVDSVAALTPKAEIEGEMGDSHMGLQARLMSQALRKITGNAKRSNCMVIFINQIRMKIGVMFGSPETTTGGNALKFYASVRLDIRRIGQVKEGDEIVGSETKVKVVKNKMAPPFKEAIFQILYGKGTNQLGELVDLAVQQDIVQKAGAWYSYQGNKIGQGKNNVIRYFEENTQIAEEIERNIREQLLTTGTNGAVQIEDEEEPDLLLES.

65 to 72 (GPESSGKT) provides a ligand contact to ATP.

The protein belongs to the RecA family.

It localises to the cytoplasm. Its function is as follows. Can catalyze the hydrolysis of ATP in the presence of single-stranded DNA, the ATP-dependent uptake of single-stranded DNA by duplex DNA, and the ATP-dependent hybridization of homologous single-stranded DNAs. It interacts with LexA causing its activation and leading to its autocatalytic cleavage. The chain is Protein RecA from Acinetobacter baumannii (strain AB307-0294).